We begin with the raw amino-acid sequence, 212 residues long: 2,3-bisphosphoglycerate-dependent phosphoglycerate mutase (212 aa).

Substrate is bound by residues 9-16, 22-23, Arg-61, 88-91, Lys-99, 115-116, and 159-160; these read RHGQSEWN, TG, ERDY, RR, and GN. His-10 (tele-phosphohistidine intermediate) is an active-site residue. Glu-88 functions as the Proton donor/acceptor in the catalytic mechanism.

The protein belongs to the phosphoglycerate mutase family. BPG-dependent PGAM subfamily. In terms of assembly, homodimer.

The catalysed reaction is (2R)-2-phosphoglycerate = (2R)-3-phosphoglycerate. It participates in carbohydrate degradation; glycolysis; pyruvate from D-glyceraldehyde 3-phosphate: step 3/5. Functionally, catalyzes the interconversion of 2-phosphoglycerate and 3-phosphoglycerate. This chain is 2,3-bisphosphoglycerate-dependent phosphoglycerate mutase, found in Methylorubrum populi (strain ATCC BAA-705 / NCIMB 13946 / BJ001) (Methylobacterium populi).